A 361-amino-acid chain; its full sequence is MDFTSSKSVSLFETSLLKENQFQQPQQQPSSPIKPIKPILKLVVNSNKKYNNKNISNNNNNNNNNNNNVCGNINNNNELGDQSDIERSFLINNFEGSDQLTNPYYNSIDIESIIIEVYSNQFSKLNCDFQGLISSKSKILNSNNFSSDYNYNNYNNNNNNNNNNNNNNNNNNNNNNNNNNNNNNKNNNKNNNNKPNNFIHHHHHHHHYHHYHNHHKVENLIDSHIFIGLMAFLILFILMVIGLLIYKYNLKKRVLILLEKRYQRKKKVKTSQFGDDFTSAKFSQVFPKNLNINQKNKDDGDDSSGADDLSVGGESFDGESDFEHFKEVQVVGDIDNVFFFKNNNYYYEENFDNENLINKEF.

Disordered regions lie at residues 53–75 and 150–211; these read KNISNNNNNNNNNNNNVCGNINN and NYNN…YHHY. Positions 150–198 are enriched in low complexity; sequence NYNNYNNNNNNNNNNNNNNNNNNNNNNNNNNNNNNKNNNKNNNNKPNNF. The segment covering 199-211 has biased composition (basic residues); the sequence is IHHHHHHHHYHHY. The chain crosses the membrane as a helical span at residues 225–245; that stretch reads IFIGLMAFLILFILMVIGLLI.

The protein resides in the membrane. This is an uncharacterized protein from Dictyostelium discoideum (Social amoeba).